A 232-amino-acid polypeptide reads, in one-letter code: Ion-translocating oxidoreductase complex subunit E (232 aa).

6 helical membrane passes run 18–38 (GLVQ…LTNA), 39–59 (LGLG…VSLV), 69–89 (IPVF…LINA), 93–113 (GLYL…IIIG), 127–147 (AAFD…VLGA), and 182–202 (PFLL…LIAL).

It belongs to the NqrDE/RnfAE family. The complex is composed of six subunits: RnfA, RnfB, RnfC, RnfD, RnfE and RnfG.

The protein resides in the cell inner membrane. Part of a membrane-bound complex that couples electron transfer with translocation of ions across the membrane. The protein is Ion-translocating oxidoreductase complex subunit E of Shewanella sp. (strain MR-4).